Reading from the N-terminus, the 30-residue chain is Non-toxic phospholipase A2 (30 aa).

Tyr-26, Gly-28, and Gly-30 together coordinate Ca(2+).

This sequence belongs to the phospholipase A2 family. Group I subfamily. In terms of assembly, homodimer. The cofactor is Ca(2+). Post-translationally, glycosylated. As to expression, expressed by the venom gland.

The protein localises to the secreted. The enzyme catalyses a 1,2-diacyl-sn-glycero-3-phosphocholine + H2O = a 1-acyl-sn-glycero-3-phosphocholine + a fatty acid + H(+). With respect to regulation, enzymatic activity is diminished by Cd(2+) and Hg(2+). Its function is as follows. Relatively highly potent phospholipase A2 that displays potent antimicrobial and hemolytic activities. It does not show cytotoxic effects on the three human cell lines tested. PLA2 catalyzes the calcium-dependent hydrolysis of the 2-acyl groups in 3-sn-phosphoglycerides. It shows similar potencies on both Gram-negative and Gram-positive bacteria: B.cereus (MIC&gt;9 ug/ml), B.subtilis (MIC&gt;12 ug/ml), E.faecalis (MIC&gt;7 ug/ml), S.epidermidis (MIC&gt;12 ug/ml), S.aureux (MIC&gt;5 ug/ml), E.coli (MIC&gt;7 ug/ml), K.pneumonia (MIC&gt;8 ug/ml), P.aeruginosa (MIC&gt;10 ug/ml), and S.enteric (MIC&gt;9 ug/ml). It also shows antifungal activities: A.niger (MIC&gt;15 ug/ml), B.cinerea (MIC&gt;12 ug/ml), F.solani (MIC&gt;15 ug/ml), and P.digitatum (MIC&gt;10 ug/ml). In Walterinnesia aegyptia (Desert black snake), this protein is Non-toxic phospholipase A2.